A 507-amino-acid polypeptide reads, in one-letter code: 2,3-bisphosphoglycerate-independent phosphoglycerate mutase (507 aa).

Residues Asp-11 and Ser-61 each contribute to the Mn(2+) site. Ser-61 acts as the Phosphoserine intermediate in catalysis. Residues His-122, 150–151 (RD), Arg-182, Arg-188, 257–260 (RPDR), and Lys-332 each bind substrate. Mn(2+) is bound by residues Asp-397, His-401, Asp-438, His-439, and His-456.

This sequence belongs to the BPG-independent phosphoglycerate mutase family. Monomer. The cofactor is Mn(2+).

It carries out the reaction (2R)-2-phosphoglycerate = (2R)-3-phosphoglycerate. Its pathway is carbohydrate degradation; glycolysis; pyruvate from D-glyceraldehyde 3-phosphate: step 3/5. Functionally, catalyzes the interconversion of 2-phosphoglycerate and 3-phosphoglycerate. This is 2,3-bisphosphoglycerate-independent phosphoglycerate mutase from Mycoplasma genitalium (strain ATCC 33530 / DSM 19775 / NCTC 10195 / G37) (Mycoplasmoides genitalium).